We begin with the raw amino-acid sequence, 555 residues long: MIWVAVVITMLLFILVAKPTGIYLEKAFQGSKKLDKVFGPFEKLIFKITGVKEYNQTWKQYALSLVLLNGFMIVVVYFIFRLQGVLPLNPAHIEGMEPTLAFNTAISFMADTNLQHYSGENGLSYLSQLIGITFLMFAAPATTLALVMAFIRGLAGKELGNFFIDFTRALTRVFLPIAFMAALVFVALGVPQTLDGAVTAQTIDGAKQSILRGPVASFVAIKELGNNGGGFFGANSTHPFENPGQMSNILQMMLMMLLPTALPFTYGRMVGNKKQGRILFVSLFMVFLLGFITITTSELNGNPALNAMGIERVQGSTEGKEVRFGTVFSSLYATVTTAAETGAVNTMHDTLTPIGGLVPLVNMMLNTVYGGVGAGFVNIIMYAIIAVFISGLMVGRTPEFLGKKIEGKEMKLIAVTILFHPLLILGFSALALSTSLGTDAISHSGFHGLTQVVYEYTSSAANNGSGFEGLGDNTPFWNITTGLVMFLGRYFSLITMLAVAASLKEKTVVPETVGTFRTDNGLFGGIFIGTIVIVGALTFFPMLVLGPIAEFLTLK.

10 consecutive transmembrane segments (helical) span residues 2 to 22 (IWVAVVITMLLFILVAKPTGI), 60 to 80 (QYALSLVLLNGFMIVVVYFIF), 130 to 150 (IGITFLMFAAPATTLALVMAF), 173 to 193 (VFLPIAFMAALVFVALGVPQT), 246 to 266 (MSNILQMMLMMLLPTALPFTY), 278 to 298 (ILFVSLFMVFLLGFITITTSE), 374 to 394 (AGFVNIIMYAIIAVFISGLMV), 412 to 432 (LIAVTILFHPLLILGFSALAL), 483 to 503 (LVMFLGRYFSLITMLAVAASL), and 525 to 545 (GIFIGTIVIVGALTFFPMLVL).

It belongs to the KdpA family. The system is composed of three essential subunits: KdpA, KdpB and KdpC.

The protein resides in the cell membrane. Its function is as follows. Part of the high-affinity ATP-driven potassium transport (or Kdp) system, which catalyzes the hydrolysis of ATP coupled with the electrogenic transport of potassium into the cytoplasm. This subunit binds the extracellular potassium ions and delivers the ions to the membrane domain of KdpB through an intramembrane tunnel. This is Potassium-transporting ATPase potassium-binding subunit from Bacillus thuringiensis (strain Al Hakam).